The following is a 215-amino-acid chain: Large ribosomal subunit protein bL25 (215 aa).

A compositionally biased stretch (acidic residues) spans 192-203 (EEATEEEEEAAE). Positions 192–215 (EEATEEEEEAAEPEVIKRKEEEEE) are disordered. The span at 205–215 (EVIKRKEEEEE) shows a compositional bias: basic and acidic residues.

This sequence belongs to the bacterial ribosomal protein bL25 family. CTC subfamily. In terms of assembly, part of the 50S ribosomal subunit; part of the 5S rRNA/L5/L18/L25 subcomplex. Contacts the 5S rRNA. Binds to the 5S rRNA independently of L5 and L18.

Its function is as follows. This is one of the proteins that binds to the 5S RNA in the ribosome where it forms part of the central protuberance. This chain is Large ribosomal subunit protein bL25, found in Thermotoga sp. (strain RQ2).